The following is a 159-amino-acid chain: Keratin-associated protein 9-3 (159 aa).

Repeat copies occupy residues 8–12, 13–17, 32–36, 37–41, 46–50, 51–55, 56–60, 61–65, 70–74, 75–79, 80–84, 85–89, 129–133, 134–138, 139–143, and 153–157. The tract at residues 8-157 is 16 X 5 AA repeats of C-C-[RQVSHE]-[SPTN]-[TASPI]; sequence CCQPTCCRTT…TCVYSCCQPS (150 aa).

The protein belongs to the KRTAP type 9 family. Interacts with hair keratins.

In terms of biological role, in the hair cortex, hair keratin intermediate filaments are embedded in an interfilamentous matrix, consisting of hair keratin-associated proteins (KRTAP), which are essential for the formation of a rigid and resistant hair shaft through their extensive disulfide bond cross-linking with abundant cysteine residues of hair keratins. The matrix proteins include the high-sulfur and high-glycine-tyrosine keratins. The chain is Keratin-associated protein 9-3 (KRTAP9-3) from Homo sapiens (Human).